We begin with the raw amino-acid sequence, 53 residues long: uncharacterized protein (53 aa).

The segment covering Ser14–Ser33 has biased composition (low complexity). A disordered region spans residues Ser14 to Phe53.

This is an uncharacterized protein from Dictyostelium discoideum (Social amoeba).